The following is a 79-amino-acid chain: uncharacterized protein (79 aa).

The first 33 residues, 1-33 (MRLIIRAIVLLALVWIGLLMSGYGILVGSKVNA), serve as a signal peptide directing secretion.

This is an uncharacterized protein from Salmonella typhi.